The sequence spans 469 residues: 6-phospho-beta-galactosidase (469 aa).

Glutamine 19, histidine 116, asparagine 159, glutamate 160, and asparagine 297 together coordinate D-galactose 6-phosphate. Glutamate 160 (proton donor) is an active-site residue. Glutamate 375 (nucleophile) is an active-site residue. D-galactose 6-phosphate is bound by residues serine 428, tryptophan 429, lysine 435, and tyrosine 437.

This sequence belongs to the glycosyl hydrolase 1 family.

The catalysed reaction is a 6-phospho-beta-D-galactoside + H2O = D-galactose 6-phosphate + an alcohol. It functions in the pathway carbohydrate metabolism; lactose degradation; D-galactose 6-phosphate and beta-D-glucose from lactose 6-phosphate: step 1/1. This Streptococcus equi subsp. zooepidemicus (strain H70) protein is 6-phospho-beta-galactosidase.